The following is a 246-amino-acid chain: uncharacterized protein (246 aa).

Transmembrane regions (helical) follow at residues 32 to 52 (TLFF…VGFI), 69 to 89 (IIAI…MCPF), 121 to 141 (IYFK…GVKI), and 146 to 166 (LAYL…MFFC). 2 4Fe-4S ferredoxin-type domains span residues 185 to 213 (FKLK…ITEK) and 210 to 239 (ITEK…FSAF). Positions 194, 197, 200, 204, 219, 222, 225, and 229 each coordinate [4Fe-4S] cluster.

It is found in the cell membrane. This is an uncharacterized protein from Methanocaldococcus jannaschii (strain ATCC 43067 / DSM 2661 / JAL-1 / JCM 10045 / NBRC 100440) (Methanococcus jannaschii).